Here is a 367-residue protein sequence, read N- to C-terminus: Cis-3-hydroxy-L-proline dehydratase (367 aa).

The active-site Proton donor/acceptor is Lys165. Mg(2+) contacts are provided by Asp193, Glu218, and Asp241. The active-site Proton donor/acceptor is the Lys265.

Belongs to the mandelate racemase/muconate lactonizing enzyme family. Requires Mg(2+) as cofactor.

The enzyme catalyses cis-3-hydroxy-L-proline = 1-pyrroline-2-carboxylate + H2O. In terms of biological role, catalyzes the dehydration of cis-3-hydroxy-L-proline (c3LHyp) to Delta(1)-pyrroline-2-carboxylate (Pyr2C). Is likely involved in a degradation pathway that converts c3LHyp to L-proline, which allows L.aggregata to grow on c3LHyp as a sole carbon source. Also catalyzes the epimerization of c3LHyp to trans-3-hydroxy-D-proline (t3DHyp), a competing reaction occurring from the same enolate anion intermediate. L-proline, t3LHyp, t4LHyp, c4DHyp and their methylated derivatives are not substrates. The sequence is that of Cis-3-hydroxy-L-proline dehydratase from Roseibium aggregatum (strain ATCC 25650 / DSM 13394 / JCM 20685 / NBRC 16684 / NCIMB 2208 / IAM 12614 / B1) (Stappia aggregata).